The chain runs to 390 residues: MSIASSLTSATLCGASVFPKALACSSEFPINLPSPFESSKICLTSFPASRDLKKNATLNLTRNVGPVRCHAMQAGTRELKKFELSDVIEGKQFDREMLSAIFDVAREMEKIEKSSSQSEILKGYLMATLFYEPSTRTRLSFESAMKRLGGEVLTTENAREFSSAAKGETLEDTIRTVEGYSDIIVMRHFESGAARKAAATANIPVINAGDGPGEHPTQALLDVYTIQSEIGKLDGISVALVGDLANGRTVRSLAYLLAKFKDVKIYFVSPEIVKMKDDIKDYLTSSGVEWEESSDLMEVASKCDVVYQTRIQRERFGERLDLYEAARGKYIVDKDLLGVMQKKAIIMHPLPRLDEITADVDADPRAAYFRQAKNGLFIRMALLKLLLVGW.

The N-terminal 68 residues, Met1 to Arg68, are a transit peptide targeting the chloroplast. Positions 136 and 137 each coordinate carbamoyl phosphate. Positions 136 and 137 each coordinate UMP. Lys166 provides a ligand contact to L-aspartate. 3 residues coordinate carbamoyl phosphate: Arg187, His215, and Gln218. Positions 187 and 215 each coordinate UMP. 2 residues coordinate UMP: Arg248 and Arg310. Arg248 and Arg310 together coordinate L-aspartate. The carbamoyl phosphate site is built by Leu350 and Pro351.

Belongs to the aspartate/ornithine carbamoyltransferase superfamily. ATCase family. As to quaternary structure, homotrimer.

The protein resides in the plastid. It localises to the chloroplast. The catalysed reaction is carbamoyl phosphate + L-aspartate = N-carbamoyl-L-aspartate + phosphate + H(+). Its pathway is pyrimidine metabolism; UMP biosynthesis via de novo pathway; (S)-dihydroorotate from bicarbonate: step 2/3. Feedback inhibited by UMP. Functionally, catalyzes the condensation of carbamoyl phosphate and aspartate to form carbamoyl aspartate and inorganic phosphate, the committed step in the de novo pyrimidine nucleotide biosynthesis pathway. The sequence is that of Aspartate carbamoyltransferase, chloroplastic (PYRB) from Arabidopsis thaliana (Mouse-ear cress).